A 76-amino-acid chain; its full sequence is Omega-conotoxin MoVIA (76 aa).

Positions 1–22 are cleaved as a signal peptide; sequence MKLTCVVIVAVLFLTACQLITA. A propeptide spanning residues 23 to 45 is cleaved from the precursor; sequence DDSRSTQRHRALRSTTKLSMSTR. Cystine bridges form between cysteine 46-cysteine 61, cysteine 53-cysteine 64, and cysteine 60-cysteine 71. A hydroxyproline mark is found at proline 49 and proline 55.

It belongs to the conotoxin O1 superfamily. Expressed by the venom duct.

It is found in the secreted. Its function is as follows. Omega-conotoxins act at presynaptic membranes, they bind and block voltage-gated calcium channels (Cav). This toxin potently blocks mammalian N-type calcium channels (Cav2.2/CACNA1B) (IC(50)=330 nM on human channels). It is 9-fold more potent in displacing radiolabeled omega-conotoxin GVIA from fish brain membranes than from human SH-SY5Y cells. Omega-conotoxins act at presynaptic membranes, they bind and block voltage-gated calcium channels (Cav). This toxin potently blocks mammalian N-type calcium channels (Cav2.2/CACNA1B) (IC(50)=600 nM on human channels). It is 60-fold more potent in displacing radiolabeled omega-conotoxin GVIA from fish brain membranes than from human SH-SY5Y cells. In vivo, when tested on rat neuropathic pain model, this toxin shows an analgesic activity. The sequence is that of Omega-conotoxin MoVIA from Conus moncuri (Sea snail).